Consider the following 139-residue polypeptide: MQDPRHPQGLPLSPGLPKRQRQDRTIYNWKQQEVLENHFKEEQYPDYDTRQELAEMLNLREYQVQVWFKNRRAKRSRERWFQKQLQQLQKHPQQQHPQQQHPQQQLQQQQPQQQPQQQQPQQQPQQQQPQQQQLHQQPQ.

Disordered stretches follow at residues 1 to 22 and 78 to 139; these read MQDPRHPQGLPLSPGLPKRQRQ and ERWF…QQPQ. The homeobox DNA-binding region spans 20 to 79; that stretch reads QRQDRTIYNWKQQEVLENHFKEEQYPDYDTRQELAEMLNLREYQVQVWFKNRRAKRSRER. Over residues 82–139 the composition is skewed to low complexity; it reads QKQLQQLQKHPQQQHPQQQHPQQQLQQQQPQQQPQQQQPQQQPQQQQPQQQQLHQQPQ.

The protein belongs to the paired homeobox family.

It localises to the nucleus. Transcription factor required for zygotic genome activation (ZGA), a critical event in early embryonic development during which the developmental control passes from maternally provided mRNAs to the expression of the zygotic genome after fertilization. Protein produced from maternal transcripts that binds and activates expression of key ZGA marker genes, such as NANOGNB, ZSCAN4, DUXB, KLF5 and DPPA3. Binds to regulatory DNA sequences containing a 5'-TAATCC-3' sequence motif. In Homo sapiens (Human), this protein is Tetra-peptide repeat homeobox-like protein.